The chain runs to 109 residues: Large ribosomal subunit protein uL22 (109 aa).

It belongs to the universal ribosomal protein uL22 family. As to quaternary structure, part of the 50S ribosomal subunit.

This protein binds specifically to 23S rRNA; its binding is stimulated by other ribosomal proteins, e.g. L4, L17, and L20. It is important during the early stages of 50S assembly. It makes multiple contacts with different domains of the 23S rRNA in the assembled 50S subunit and ribosome. Its function is as follows. The globular domain of the protein is located near the polypeptide exit tunnel on the outside of the subunit, while an extended beta-hairpin is found that lines the wall of the exit tunnel in the center of the 70S ribosome. This chain is Large ribosomal subunit protein uL22, found in Psychrobacter cryohalolentis (strain ATCC BAA-1226 / DSM 17306 / VKM B-2378 / K5).